Here is a 660-residue protein sequence, read N- to C-terminus: Acetyl-coenzyme A synthetase (660 aa).

Residues 197–200 (RGGK) and Thr-317 each bind CoA. ATP-binding positions include 397–399 (GEP), 421–426 (DTFWQT), Asp-512, and Arg-528. Ser-536 contacts CoA. Arg-539 is an ATP binding site. The Mg(2+) site is built by Val-550 and Val-555. Lys-625 carries the N6-acetyllysine modification.

It belongs to the ATP-dependent AMP-binding enzyme family. Mg(2+) is required as a cofactor. Acetylated. Deacetylation by the SIR2-homolog deacetylase activates the enzyme.

It carries out the reaction acetate + ATP + CoA = acetyl-CoA + AMP + diphosphate. Its function is as follows. Catalyzes the conversion of acetate into acetyl-CoA (AcCoA), an essential intermediate at the junction of anabolic and catabolic pathways. AcsA undergoes a two-step reaction. In the first half reaction, AcsA combines acetate with ATP to form acetyl-adenylate (AcAMP) intermediate. In the second half reaction, it can then transfer the acetyl group from AcAMP to the sulfhydryl group of CoA, forming the product AcCoA. This chain is Acetyl-coenzyme A synthetase, found in Herminiimonas arsenicoxydans.